Consider the following 275-residue polypeptide: MSFLKELFSRYTLHEGQSKSAELAYFFLLSLFPFLIFMLTLTAYLPLSTDDVLGVIEQYAPASAMSLVESITHQTLNNRNGGLLSFGIIAALWSASNGMNAIVRSLNHAYDVEENRSFIIVRLTSIFLTIAMVFTILVALLLPVFGREIGRLASDFVGASDLFLSVWAAIRWGVSPLVLLIVFSALYVIAPNKKLSLRFVMPGAVFATIGWIIVSTLFSFYVSTFANYSATYGSIGGIIVLMIWFYLSGILIILGGEINALLHKRKKLPDENPYH.

A run of 6 helical transmembrane segments spans residues 23–43 (LAYFFLLSLFPFLIFMLTLTA), 83–103 (LLSFGIIAALWSASNGMNAIV), 126–146 (IFLTIAMVFTILVALLLPVFG), 172–192 (WGVSPLVLLIVFSALYVIAPN), 199–219 (FVMPGAVFATIGWIIVSTLFS), and 235–255 (IGGIIVLMIWFYLSGILIILG).

It localises to the cell membrane. This chain is Putative ribonuclease-like protein YfkH (yfkH), found in Bacillus subtilis (strain 168).